The primary structure comprises 344 residues: Protein BREVIS RADIX (344 aa).

A BRX 1 domain is found at 139–194; it reads KEWMAQVEPGVHITFASLPTGGNDLKRIRFSREMFDKWQAQRWWGENYDKIVELYN. Residues 203-286 form a disordered region; sequence LQTPARSDDQ…DPPSMSNASE (84 aa). Positions 223 to 233 are enriched in basic and acidic residues; it reads DSARESKDWTP. Over residues 248–264 the composition is skewed to low complexity; it reads YGGSSNYGPGSYHGGPP. One can recognise a BRX 2 domain in the interval 289-344; the sequence is AEWIEEDEPGVYITIRQLSDGTRELRRVRFSRERFGEVHAKTWWEQNRERIQTQYL.

This sequence belongs to the BRX family. As to quaternary structure, homodimer and heterodimer with BRXL1. Interacts with NGA1 and ARF5. As to expression, expressed in the developing protophloem up to the elongation zone in root meristem of young seedlings, in the columella and the phloem vasculature throughout the root and in the phloem vasculature in the shoot. Detected in the shoot meristem and in primordia. Low expression in stomata. Confined to sieve element precursor cells and to protophloem.

The protein localises to the nucleus. The protein resides in the cell membrane. Acts as a regulator of cell proliferation and elongation in the root and shoot. Regulates roots architecture and primary root protophloem differentiation. BRX, BAM3, and CLE45 act together to regulate the transition of protophloem cells from proliferation to differentiation, thus impinging on postembryonic growth capacity of the root meristem. Probable transcription regulator. Regulated by the auxin response factor ARF5. Polarly localized in vascular cells and subject to endocytic recycling. Required for CPD expression and for correct nuclear auxin response. Mediates cross-talk between the auxin and brassinosteroid pathways. BRX is a target for auxin-induced, proteasome-mediated degradation. The chain is Protein BREVIS RADIX from Arabidopsis thaliana (Mouse-ear cress).